The primary structure comprises 282 residues: Pantothenate synthetase (282 aa).

Residue 31–38 (MGYLHEGH) participates in ATP binding. Histidine 38 (proton donor) is an active-site residue. Glutamine 62 provides a ligand contact to (R)-pantoate. Position 62 (glutamine 62) interacts with beta-alanine. Residue 148–151 (GEKD) coordinates ATP. Glutamine 154 provides a ligand contact to (R)-pantoate. Residues valine 177 and 185–188 (YSSR) each bind ATP.

This sequence belongs to the pantothenate synthetase family. As to quaternary structure, homodimer.

The protein resides in the cytoplasm. The catalysed reaction is (R)-pantoate + beta-alanine + ATP = (R)-pantothenate + AMP + diphosphate + H(+). The protein operates within cofactor biosynthesis; (R)-pantothenate biosynthesis; (R)-pantothenate from (R)-pantoate and beta-alanine: step 1/1. In terms of biological role, catalyzes the condensation of pantoate with beta-alanine in an ATP-dependent reaction via a pantoyl-adenylate intermediate. In Aquifex aeolicus (strain VF5), this protein is Pantothenate synthetase.